Reading from the N-terminus, the 313-residue chain is tRNA pseudouridine synthase B (313 aa).

Histidine 44 lines the substrate pocket. The Nucleophile role is filled by aspartate 49. 3 residues coordinate substrate: tyrosine 77, tyrosine 180, and leucine 201.

This sequence belongs to the pseudouridine synthase TruB family. Type 1 subfamily.

It carries out the reaction uridine(55) in tRNA = pseudouridine(55) in tRNA. Its function is as follows. Responsible for synthesis of pseudouridine from uracil-55 in the psi GC loop of transfer RNAs. In Hamiltonella defensa subsp. Acyrthosiphon pisum (strain 5AT), this protein is tRNA pseudouridine synthase B.